Consider the following 268-residue polypeptide: 5'-nucleotidase SurE (268 aa).

Aspartate 24, aspartate 25, serine 55, and asparagine 111 together coordinate a divalent metal cation.

This sequence belongs to the SurE nucleotidase family. A divalent metal cation is required as a cofactor.

Its subcellular location is the cytoplasm. It carries out the reaction a ribonucleoside 5'-phosphate + H2O = a ribonucleoside + phosphate. Functionally, nucleotidase that shows phosphatase activity on nucleoside 5'-monophosphates. The protein is 5'-nucleotidase SurE of Deinococcus radiodurans (strain ATCC 13939 / DSM 20539 / JCM 16871 / CCUG 27074 / LMG 4051 / NBRC 15346 / NCIMB 9279 / VKM B-1422 / R1).